The primary structure comprises 3088 residues: Protein prune homolog 2 (3088 aa).

Met1 carries the N-acetylmethionine modification. Positions 109-111 (GSS) match the DHH motif motif. Disordered stretches follow at residues 433 to 468 (IRSS…GLDS), 490 to 628 (HFDL…EPAS), 673 to 759 (SSEQ…QGTN), 771 to 795 (SGRS…AAVA), 846 to 909 (SELL…PKTR), 952 to 1080 (SNLG…SSYD), 1192 to 1211 (SDEH…NEKS), 1231 to 1371 (SFML…LVAS), 1413 to 1452 (RDVQ…GMNF), 1472 to 1491 (LEPE…SLDF), 1515 to 1585 (VKGS…QESE), 1632 to 1698 (DSFS…EESI), 1741 to 1768 (LDSS…DPWT), 1782 to 1813 (VEKE…KNED), 2089 to 2114 (ILTH…SEAK), 2173 to 2215 (YQAD…PDMA), 2240 to 2260 (QEPT…PESQ), 2492 to 2542 (SDLP…KNED), 2589 to 2667 (TQLA…SELG), 2687 to 2710 (ALEE…AGPD), 2814 to 2833 (QSEG…EIDI), and 2841 to 2875 (PDEA…AEEE). Residues 503 to 512 (SGQSQQSSHS) show a composition bias toward low complexity. The segment covering 562 to 582 (SLVEHDEEFVQRQDSPRDNSE) has biased composition (basic and acidic residues). Polar residues-rich tracts occupy residues 613-625 (MNSL…STEE) and 673-684 (SSEQESVFQSPE). Basic and acidic residues predominate over residues 685 to 699 (SWKEHKPSSIDRRAS). The segment covering 750–759 (LPNTSPQGTN) has biased composition (polar residues). The segment covering 846-857 (SELLDNSPSEIN) has biased composition (polar residues). Over residues 865 to 876 (WGKKNNDSRDHI) the composition is skewed to basic and acidic residues. Over residues 881–894 (NPSSDLDHTWTNSK) the composition is skewed to polar residues. The segment covering 895-909 (PPKEDQNGLVDPKTR) has biased composition (basic and acidic residues). The segment covering 964–977 (DTNYSTSDSYTSPT) has biased composition (low complexity). Residues 980 to 1000 (GDEKETEHKPFAKEEGFESKD) show a composition bias toward basic and acidic residues. 2 stretches are compositionally biased toward polar residues: residues 1001–1027 (GNST…SSGP) and 1037–1048 (HTDNSSEINTTH). 5 stretches are compositionally biased toward basic and acidic residues: residues 1049 to 1062 (NLDE…HTDG), 1192 to 1208 (SDEH…HTLN), 1282 to 1293 (HLDKQDTERETL), 1314 to 1339 (DPWK…RGHL), and 1425 to 1434 (QPKDTHEKHL). Positions 1436-1450 (SQRNSGETTETSDGM) are enriched in polar residues. Residues 1537-1585 (SSEYTHSSASSPELNDSSVALSSWGQQPSSGYQEENQGNWSEQNHQESE) show a composition bias toward polar residues. The span at 1687–1698 (SDDDSVGGEESI) shows a compositional bias: acidic residues. Residues 1752 to 1768 (KSNPFCDNQQSSPDPWT) show a composition bias toward polar residues. Composition is skewed to basic and acidic residues over residues 2516–2542 (EKTI…KNED) and 2604–2622 (NERK…DTRS). Over residues 2623–2632 (SFESPAQDQS) the composition is skewed to polar residues. Acidic residues predominate over residues 2823–2833 (DNLDSPDEIDI). The CRAL-TRIO domain maps to 2895 to 3056 (DMKVIEPYRR…SIIKLDEELR (162 aa)).

It belongs to the PPase class C family. Prune subfamily. As to expression, a high level of expression seen in the nervous system (brain, cerebellum and spinal cord) as well as adrenal gland. Expressed at high levels in noneuroblastoma, rhabdomyosarcoma, melanoma and some osteosarcoma cell lines, whereas at only low levels in cancer cell lines of liver, breast, thyroid and colon. Expression is significantly higher in favorable tumors than aggressive ones.

Its subcellular location is the cytoplasm. Functionally, may play an important role in regulating differentiation, survival and aggressiveness of the tumor cells. The chain is Protein prune homolog 2 (PRUNE2) from Homo sapiens (Human).